A 127-amino-acid polypeptide reads, in one-letter code: Anti-adapter protein IraD (127 aa).

The protein belongs to the GpW/Gp25 family. IraD subfamily. In terms of assembly, interacts with RssB.

The protein localises to the cytoplasm. Functionally, inhibits RpoS proteolysis by regulating RssB activity, thereby increasing the stability of the sigma stress factor RpoS during oxidative stress. Its effect on RpoS stability is due to its interaction with RssB, which probably blocks the interaction of RssB with RpoS, and the consequent delivery of the RssB-RpoS complex to the ClpXP protein degradation pathway. This is Anti-adapter protein IraD from Escherichia coli O127:H6 (strain E2348/69 / EPEC).